Reading from the N-terminus, the 124-residue chain is LOB domain-containing protein 9 (124 aa).

Residues 11–113 form the LOB domain; the sequence is APCALCTTKN…IYLNELKEKI (103 aa).

It belongs to the LOB domain-containing protein family.

This Arabidopsis thaliana (Mouse-ear cress) protein is LOB domain-containing protein 9 (LBD9).